A 265-amino-acid chain; its full sequence is Mlc titration factor A (265 aa).

Residues histidine 111, histidine 148, histidine 152, and glutamate 211 each coordinate Zn(2+).

This sequence belongs to the MtfA family. In terms of assembly, interacts with Mlc with high affinity. It depends on Zn(2+) as a cofactor.

It localises to the cytoplasm. Proteolytic activity is stimulated by interaction with Mlc. Addition of the chelators EDTA or phenanthroline significantly reduces the peptidase activity, whereas the addition of other protease inhibitors has much less effect. In terms of biological role, involved in the modulation of the activity of the glucose-phosphotransferase system (glucose-PTS). Interacts with the transcriptional repressor Mlc, preventing its interaction with DNA and leading to the modulation of expression of genes regulated by Mlc, including ptsG, which encodes the PTS system glucose-specific EIICB component. Its function is as follows. Shows zinc-dependent metallopeptidase activity. In vitro, can cleave several artificial substrates. The greatest activity and specificity is observed for L-alanine fused to 4-nitroanilide (L-alanine-pNA). Shows significantly lower activity towards L-arginine-pNA, L-proline-pNA, hippuryl-L-phenylalanine and hippuryl-L-arginine, and cannot use FTC-casein. Mlc does not appear to be a biologically relevant peptidase substrate. Biologically relevant targets may have a function in growth transition under changing environmental conditions. The protein is Mlc titration factor A of Escherichia coli (strain K12).